We begin with the raw amino-acid sequence, 1226 residues long: MDREERKTINQGQEDEMEIYGYNLSRWKLAIVSLGVICSGGFLLLLLYWMPEWRVKATCVRAAIKDCEVVLLRTTDEFKMWFCAKIRVLSLETYPVSSPKSMSNKLSNGHAVCLIENPTEENRHRISKYSQTESQQIRYFTHHSVKYFWNDTIHNFDFLKGLDEGVSCTSIYEKHSAGLTKGMHAYRKLLYGVNEIAVKVPSVFKLLIKEVLNPFYIFQLFSVILWSTDEYYYYALAIVVMSIVSIVSSLYSIRKQYVMLHDMVATHSTVRVSVCRVNEEIEEIFSTDLVPGDVMVIPLNGTIMPCDAVLINGTCIVNESMLTGESVPVTKTNLPNPSVDVKGIGDELYNPETHKRHTLFCGTTVIQTRFYTGELVKAIVVRTGFSTSKGQLVRSILYPKPTDFKLYRDAYLFLLCLVAVAGIGFIYTIINSILNEVQVGVIIIESLDIITITVPPALPAAMTAGIVYAQRRLKKIGIFCISPQRINICGQLNLVCFDKTGTLTEDGLDLWGIQRVENARFLSPEENVCNEMLVKSQFVACMATCHSLTKIEGVLSGDPLDLKMFEAIGWILEEATEEETALHNRIMPTVVRPPKQLLPESTPAGNQEMELFELPATYEIGIVRQFPFSSALQRMSVVARVLGDRKMDAYMKGAPEAIAGLCKPETVPVDFQNVLEDFTKQGFRVIALAHRKLESKLTWHKVQNISRDAIENNMDFMGLIIMQNKLKQETPAVLEDLHKANIRTVMVTGDSMLTAVSVARDCGMILPQDKVIIAEALPPKDGKVAKINWHYADSLTQCSHPSAIDPEAIPVKLVHDSLEDLQMTRYHFAMNGKSFSVILEHFQDLVPKLMLHGTVFARMAPDQKTQLIEALQNVDYFVGMCGDGANDCGALKRAHGGISLSELEASVASPFTSKTPSISCVPNLIREGRAALITSFCVFKFMALYSIIQYFSVTLLYSILSNLGDFQFLFIDLAIILVVVFTMSLNPAWKELVAQRPPSGLISGALLFSVLSQIIICIGFQSLGFFWVKQQPWYEVWHPKSDACNTTGSGFWNSSHVDNETELDEHNIQNYENTTVFFISSFQYLIVAIAFSKGKPFRQPCYKNYFFVFSVIFLYIFILFIMLYPVASVDQVLQIVCVPYQWRVTMLIIVLVNAFVSITVEESVDRWGKCCLPWALGCRKKTPKAKYMYLAQELLVDPEWPPKPQTTTEAKALVKENGSCQIITIT.

Over 1 to 28 the chain is Cytoplasmic; sequence MDREERKTINQGQEDEMEIYGYNLSRWK. The stretch at 29–49 is an intramembrane region; the sequence is LAIVSLGVICSGGFLLLLLYW. Residues 50–205 lie on the Cytoplasmic side of the membrane; the sequence is MPEWRVKATC…IAVKVPSVFK (156 aa). Ser98 carries the phosphoserine modification. Residues 206–226 form a helical membrane-spanning segment; sequence LLIKEVLNPFYIFQLFSVILW. At 227–232 the chain is on the lumenal side; it reads STDEYY. Residues 233-253 traverse the membrane as a helical segment; it reads YYALAIVVMSIVSIVSSLYSI. Residues 254–409 are Cytoplasmic-facing; sequence RKQYVMLHDM…KPTDFKLYRD (156 aa). Residues 410–430 form a helical membrane-spanning segment; that stretch reads AYLFLLCLVAVAGIGFIYTII. The Lumenal portion of the chain corresponds to 431 to 448; sequence NSILNEVQVGVIIIESLD. A helical membrane pass occupies residues 449–469; sequence IITITVPPALPAAMTAGIVYA. Topologically, residues 470–940 are cytoplasmic; it reads QRRLKKIGIF…ALITSFCVFK (471 aa). Asp498 functions as the 4-aspartylphosphate intermediate in the catalytic mechanism. Residues Asp498 and Thr500 each coordinate Mg(2+). ATP-binding positions include 498–500, Phe628, Arg684, and Asp750; that span reads DKT. Ser817 bears the Phosphoserine mark. The Mg(2+) site is built by Asp883 and Asp887. 883-887 is an ATP binding site; that stretch reads DGAND. The chain crosses the membrane as a helical span at residues 941 to 961; that stretch reads FMALYSIIQYFSVTLLYSILS. A topological domain (lumenal) is located at residue Asn962. The helical transmembrane segment at 963–983 threads the bilayer; sequence LGDFQFLFIDLAIILVVVFTM. The Cytoplasmic portion of the chain corresponds to 984–999; sequence SLNPAWKELVAQRPPS. Residues 1000 to 1020 form a helical membrane-spanning segment; that stretch reads GLISGALLFSVLSQIIICIGF. Over 1021-1073 the chain is Lumenal; sequence QSLGFFWVKQQPWYEVWHPKSDACNTTGSGFWNSSHVDNETELDEHNIQNYEN. A helical transmembrane segment spans residues 1074–1094; it reads TTVFFISSFQYLIVAIAFSKG. The Cytoplasmic segment spans residues 1095–1105; it reads KPFRQPCYKNY. The helical transmembrane segment at 1106 to 1126 threads the bilayer; the sequence is FFVFSVIFLYIFILFIMLYPV. Residues 1127–1143 are Lumenal-facing; the sequence is ASVDQVLQIVCVPYQWR. The chain crosses the membrane as a helical span at residues 1144–1164; that stretch reads VTMLIIVLVNAFVSITVEESV. Topologically, residues 1165–1226 are cytoplasmic; the sequence is DRWGKCCLPW…NGSCQIITIT (62 aa).

It belongs to the cation transport ATPase (P-type) (TC 3.A.3) family. Type V subfamily. Broadly expressed.

Its subcellular location is the recycling endosome membrane. It localises to the early endosome membrane. It is found in the late endosome membrane. The enzyme catalyses putrescine(out) + ATP + H2O = putrescine(in) + ADP + phosphate + H(+). In terms of biological role, ATP-driven pump involved in endocytosis-dependent polyamine transport. Uses ATP as an energy source to transfer polyamine precursor putrescine from the endosomal compartment to the cytosol. In Homo sapiens (Human), this protein is Polyamine-transporting ATPase 13A3.